The sequence spans 671 residues: DNA ligase (671 aa).

Residues aspartate 35–aspartate 39, serine 84–leucine 85, and glutamate 113 each bind NAD(+). The active-site N6-AMP-lysine intermediate is lysine 115. Arginine 136, glutamate 170, lysine 285, and lysine 309 together coordinate NAD(+). 4 residues coordinate Zn(2+): cysteine 403, cysteine 406, cysteine 421, and cysteine 426. In terms of domain architecture, BRCT spans threonine 588–leucine 671.

The protein belongs to the NAD-dependent DNA ligase family. LigA subfamily. It depends on Mg(2+) as a cofactor. Mn(2+) is required as a cofactor.

The catalysed reaction is NAD(+) + (deoxyribonucleotide)n-3'-hydroxyl + 5'-phospho-(deoxyribonucleotide)m = (deoxyribonucleotide)n+m + AMP + beta-nicotinamide D-nucleotide.. Functionally, DNA ligase that catalyzes the formation of phosphodiester linkages between 5'-phosphoryl and 3'-hydroxyl groups in double-stranded DNA using NAD as a coenzyme and as the energy source for the reaction. It is essential for DNA replication and repair of damaged DNA. The sequence is that of DNA ligase from Onion yellows phytoplasma (strain OY-M).